Reading from the N-terminus, the 70-residue chain is U2-agatoxin-Ao1a (70 aa).

The N-terminal stretch at 1–20 (MRAIISLFLISAMVFSMIQA) is a signal peptide. Residues 21–34 (VPEEEGLQLSEDER) constitute a propeptide that is removed on maturation. 3 disulfide bridges follow: Cys-37–Cys-53, Cys-44–Cys-58, and Cys-52–Cys-68. Leu-69 is modified (leucine amide).

Belongs to the neurotoxin 01 (U2-agtx) family. In terms of tissue distribution, expressed by the venom gland.

The protein resides in the secreted. In terms of biological role, insect active toxin causing rapid but reversible paralysis in crickets. No activity shown in mammals. Suppresses the excitatory postsynaptic potentials evoked in lobster neuromuscular synaptic preparations, possibly by blocking the presynaptic calcium channel. Induces instantaneous reversible paralysis when injected into crickets. Does not show effect on mammalian Cav2.1/CACNA1A, Cav2.2/CACNA1B and Cav2.3/CACNA1E. This Agelena orientalis (Funnel-web spider) protein is U2-agatoxin-Ao1a.